A 98-amino-acid chain; its full sequence is NADH-ubiquinone oxidoreductase chain 4L (98 aa).

3 consecutive transmembrane segments (helical) span residues 1–21, 29–49, and 58–78; these read MPII…GMLT, SLLC…LMAL, and IVPI…LSLL.

The protein belongs to the complex I subunit 4L family. As to quaternary structure, core subunit of respiratory chain NADH dehydrogenase (Complex I) which is composed of 45 different subunits.

Its subcellular location is the mitochondrion inner membrane. The enzyme catalyses a ubiquinone + NADH + 5 H(+)(in) = a ubiquinol + NAD(+) + 4 H(+)(out). Core subunit of the mitochondrial membrane respiratory chain NADH dehydrogenase (Complex I) which catalyzes electron transfer from NADH through the respiratory chain, using ubiquinone as an electron acceptor. Part of the enzyme membrane arm which is embedded in the lipid bilayer and involved in proton translocation. In Presbytis melalophos (Mitred leaf monkey), this protein is NADH-ubiquinone oxidoreductase chain 4L (MT-ND4L).